A 288-amino-acid polypeptide reads, in one-letter code: 4-hydroxybenzoate octaprenyltransferase (288 aa).

Helical transmembrane passes span 33–53 (LWALWVASPGVPPLWILAVFV), 99–119 (LFIVLVLLSFLLVLTLNTMTI), 163–183 (ESLPLSCWLMFLANILWAVAY), 213–233 (LIIGILQVAVLALMGAVGWLN), 234–254 (GLGWEYYWSLFVAAGLFGWQQ), and 268–288 (AFMNNNYVGLVLFLGLAMSYL).

It belongs to the UbiA prenyltransferase family. The cofactor is Mg(2+).

The protein resides in the cell inner membrane. The catalysed reaction is all-trans-octaprenyl diphosphate + 4-hydroxybenzoate = 4-hydroxy-3-(all-trans-octaprenyl)benzoate + diphosphate. The protein operates within cofactor biosynthesis; ubiquinone biosynthesis. Its function is as follows. Catalyzes the prenylation of para-hydroxybenzoate (PHB) with an all-trans polyprenyl group. Mediates the second step in the final reaction sequence of ubiquinone-8 (UQ-8) biosynthesis, which is the condensation of the polyisoprenoid side chain with PHB, generating the first membrane-bound Q intermediate 3-octaprenyl-4-hydroxybenzoate. This Klebsiella pneumoniae subsp. pneumoniae (strain ATCC 700721 / MGH 78578) protein is 4-hydroxybenzoate octaprenyltransferase.